The sequence spans 245 residues: Probable GTP-binding protein EngB (245 aa).

The 178-residue stretch at 46–223 (DVPEIAFVGR…AQHLWDWAHP (178 aa)) folds into the EngB-type G domain. Residues 54–61 (GRSNAGKS), 81–85 (GRTQS), 103–106 (DLPG), 173–176 (TKSD), and 202–204 (FSS) contribute to the GTP site. The Mg(2+) site is built by Ser-61 and Thr-83. Positions 219–245 (DWAHPPEKPAKKPKAEPAAEAATGDEG) are disordered. The span at 222 to 235 (HPPEKPAKKPKAEP) shows a compositional bias: basic and acidic residues. Residues 236 to 245 (AAEAATGDEG) show a composition bias toward low complexity.

It belongs to the TRAFAC class TrmE-Era-EngA-EngB-Septin-like GTPase superfamily. EngB GTPase family. It depends on Mg(2+) as a cofactor.

Its function is as follows. Necessary for normal cell division and for the maintenance of normal septation. This Polaromonas sp. (strain JS666 / ATCC BAA-500) protein is Probable GTP-binding protein EngB.